Consider the following 128-residue polypeptide: Transcription antitermination protein NusB (128 aa).

Belongs to the NusB family.

Involved in transcription antitermination. Required for transcription of ribosomal RNA (rRNA) genes. Binds specifically to the boxA antiterminator sequence of the ribosomal RNA (rrn) operons. This Staphylococcus carnosus (strain TM300) protein is Transcription antitermination protein NusB.